A 312-amino-acid polypeptide reads, in one-letter code: Aspartate carbamoyltransferase catalytic subunit (312 aa).

Residues Arg-58 and Thr-59 each coordinate carbamoyl phosphate. Lys-86 is a binding site for L-aspartate. The carbamoyl phosphate site is built by Arg-108, His-136, and Gln-139. Residues Arg-169 and Arg-223 each contribute to the L-aspartate site. Residues Gly-264 and Pro-265 each coordinate carbamoyl phosphate.

This sequence belongs to the aspartate/ornithine carbamoyltransferase superfamily. ATCase family. As to quaternary structure, heterododecamer (2C3:3R2) of six catalytic PyrB chains organized as two trimers (C3), and six regulatory PyrI chains organized as three dimers (R2).

It catalyses the reaction carbamoyl phosphate + L-aspartate = N-carbamoyl-L-aspartate + phosphate + H(+). It participates in pyrimidine metabolism; UMP biosynthesis via de novo pathway; (S)-dihydroorotate from bicarbonate: step 2/3. Its function is as follows. Catalyzes the condensation of carbamoyl phosphate and aspartate to form carbamoyl aspartate and inorganic phosphate, the committed step in the de novo pyrimidine nucleotide biosynthesis pathway. The chain is Aspartate carbamoyltransferase catalytic subunit from Acetivibrio thermocellus (strain ATCC 27405 / DSM 1237 / JCM 9322 / NBRC 103400 / NCIMB 10682 / NRRL B-4536 / VPI 7372) (Clostridium thermocellum).